The primary structure comprises 258 residues: uncharacterized protein (258 aa).

36–43 serves as a coordination point for ATP; sequence GKAGTGKS.

It belongs to the IIV-6 075L family.

This is an uncharacterized protein from Acheta domesticus (House cricket).